The primary structure comprises 596 residues: MAQAWAFLLPVLVLGSYVTSLFFPSYISNPLCGGDGGRSLFLCAQAPKDQDPSPAVSTMYKTAFHFQPAKNWMNDPSGPMYFNGIYHEFYQYNLNGPIFGDIVWGHSVSTDLVNWIGLEPALVRDTPSDIDGCWTGSVTILPGGKPIIIYTGGDIDQHQAQNIAFPKNRSDPYLREWIKAPNNPVLRPDGPGMNSIEFRDPTTGWIGPDGLWRMAVGGELNGYSAALLYKSEDFLNWTKVDHPLYSHNGSNMWECPDFFAVLPGNNAGLDLSAAIPQGAKHALKMSVDSVDKYMIGVYDLQRDAFVPDNVVDDRRLWLRIDYGTFYASKSFFDSNKNRRIIWGWSRETDSPSDDLEKGWAGLHTIPRTIWLAGDGKQLLQWPVEEIESLRTNEISHQGIELNKGDLFEIKEVDAFQADVEIVFELASIDDADSFDPSWLLDPEKHCGEAGASVPGGIGPFGLVILASDNMDEHTEVYFRVYKSQEKYMVLMCSDLRRSSLRPDLEKPAYGGFFEFDLEKERKISLRTLIDRSAVESFGGGGRVCITSRVYPAVLADVGRAHIYAFNNGSATVRVPQLSAWTMRKAQVNVEKGWSAI.

Residues 1 to 20 (MAQAWAFLLPVLVLGSYVTS) form the signal peptide. Asp-75 is a catalytic residue. Asn-168, Asn-236, and Asn-248 each carry an N-linked (GlcNAc...) asparagine glycan. The cysteines at positions 446 and 492 are disulfide-linked. Asn-567 carries N-linked (GlcNAc...) asparagine glycosylation.

The protein belongs to the glycosyl hydrolase 32 family.

It carries out the reaction Hydrolysis of terminal, non-reducing (2-&gt;1)-linked beta-D-fructofuranose residues in fructans.. Inhibited by sucrose. Its function is as follows. Hydrolyzes inulin-type beta-(2,1)-fructans. May play a role as a beta-(2,1)-trimmer during graminan biosynthesis. The sequence is that of Fructan 1-exohydrolase from Aegilops tauschii (Tausch's goatgrass).